The following is a 127-amino-acid chain: Chorismate mutase AroH (127 aa).

Residues 3-121 form the Chorismate mutase aroH-type domain; sequence IRGIRGATTV…VVVLRPDLSL (119 aa). Residues arginine 7, 74–78, arginine 90, and tyrosine 108 contribute to the prephenate site; that span reads TCMQE.

In terms of assembly, homotrimer.

Its subcellular location is the cytoplasm. It carries out the reaction chorismate = prephenate. It functions in the pathway metabolic intermediate biosynthesis; prephenate biosynthesis; prephenate from chorismate: step 1/1. In terms of biological role, catalyzes the Claisen rearrangement of chorismate to prephenate. Probably involved in the aromatic amino acid biosynthesis. This Bacillus subtilis (strain 168) protein is Chorismate mutase AroH.